A 153-amino-acid chain; its full sequence is Alpha-amylase type B isozyme (153 aa).

Residues Lys-19, 25-27 (GWW), His-38, Gln-44, Lys-123, and Trp-150 each bind substrate.

Belongs to the glycosyl hydrolase 13 family. Monomer. Ca(2+) is required as a cofactor.

It carries out the reaction Endohydrolysis of (1-&gt;4)-alpha-D-glucosidic linkages in polysaccharides containing three or more (1-&gt;4)-alpha-linked D-glucose units.. The chain is Alpha-amylase type B isozyme (AMY1.4) from Hordeum vulgare (Barley).